The sequence spans 265 residues: Probable protein VP2 (265 aa).

Disordered regions lie at residues 44 to 110, 152 to 171, and 194 to 265; these read RLGR…DDLS, STRS…SDVA, and VQNA…CSSN. Over residues 48–60 the composition is skewed to pro residues; it reads PQPPRPPGGPPGP. Over residues 152–168 the composition is skewed to low complexity; it reads STRSTSTRASRSTDGTS. Residues 221–242 are compositionally biased toward basic residues; it reads GKTRPRKKPRAKQKPKKRRRYR. Positions 243–265 are enriched in low complexity; the sequence is SSSNSSSKSNDSSDAESSTCSSN.

Post-translationally, phosphorylated at C-terminal serines.

The protein is Probable protein VP2 of Torque teno virus (isolate Human/Germany/KAV/2001) (TTV).